A 539-amino-acid polypeptide reads, in one-letter code: Chaperone Ric-8A (539 aa).

The segment at 506–539 (PMGVTSDGRLGPLDEAAQKMLQRQESSDLDSDSD) is disordered.

Belongs to the synembryn family.

The protein localises to the cytoplasm. It is found in the cell cortex. Chaperone that specifically binds and folds nascent G alpha proteins prior to G protein heterotrimer formation, promoting their stability and activity: folds GNAI1, GNAO1, GNA13 and GNAQ. Does not fold G(s) G-alpha proteins GNAS nor GNAL. Also acts as a guanine nucleotide exchange factor (GEF) for G alpha proteins by stimulating exchange of bound GDP for free GTP. The polypeptide is Chaperone Ric-8A (ric8a) (Xenopus laevis (African clawed frog)).